Consider the following 311-residue polypeptide: Ribosomal RNA large subunit methyltransferase F (311 aa).

Belongs to the methyltransferase superfamily. METTL16/RlmF family.

It is found in the cytoplasm. The catalysed reaction is adenosine(1618) in 23S rRNA + S-adenosyl-L-methionine = N(6)-methyladenosine(1618) in 23S rRNA + S-adenosyl-L-homocysteine + H(+). Functionally, specifically methylates the adenine in position 1618 of 23S rRNA. This Pectobacterium carotovorum subsp. carotovorum (strain PC1) protein is Ribosomal RNA large subunit methyltransferase F.